Consider the following 116-residue polypeptide: Large ribosomal subunit protein bL17 (116 aa).

It belongs to the bacterial ribosomal protein bL17 family. In terms of assembly, part of the 50S ribosomal subunit. Contacts proteins L3 and L32.

Functionally, binds to the 23S rRNA. The sequence is that of Large ribosomal subunit protein bL17 from Deinococcus radiodurans (strain ATCC 13939 / DSM 20539 / JCM 16871 / CCUG 27074 / LMG 4051 / NBRC 15346 / NCIMB 9279 / VKM B-1422 / R1).